We begin with the raw amino-acid sequence, 337 residues long: Large ribosomal subunit protein uL3 (337 aa).

The interval 1 to 32 (MAKGHRPRRGSLAYSPRKRSQSHIPRFRSWPE) is disordered.

The protein belongs to the universal ribosomal protein uL3 family. In terms of assembly, part of the 50S ribosomal subunit. Forms a cluster with proteins L14 and L24e.

In terms of biological role, one of the primary rRNA binding proteins, it binds directly near the 3'-end of the 23S rRNA, where it nucleates assembly of the 50S subunit. This Methanococcoides burtonii (strain DSM 6242 / NBRC 107633 / OCM 468 / ACE-M) protein is Large ribosomal subunit protein uL3.